An 804-amino-acid chain; its full sequence is DNA gyrase subunit A (804 aa).

The Topo IIA-type catalytic domain maps to 31-495 (IPDVRDGLKP…QSIEYNEEEL (465 aa)). Residue tyrosine 119 is the O-(5'-phospho-DNA)-tyrosine intermediate of the active site. A GyrA-box motif is present at residues 522–528 (QKRGGKG).

The protein belongs to the type II topoisomerase GyrA/ParC subunit family. As to quaternary structure, heterotetramer, composed of two GyrA and two GyrB chains. In the heterotetramer, GyrA contains the active site tyrosine that forms a transient covalent intermediate with DNA, while GyrB binds cofactors and catalyzes ATP hydrolysis.

It localises to the cytoplasm. It carries out the reaction ATP-dependent breakage, passage and rejoining of double-stranded DNA.. In terms of biological role, a type II topoisomerase that negatively supercoils closed circular double-stranded (ds) DNA in an ATP-dependent manner to modulate DNA topology and maintain chromosomes in an underwound state. Negative supercoiling favors strand separation, and DNA replication, transcription, recombination and repair, all of which involve strand separation. Also able to catalyze the interconversion of other topological isomers of dsDNA rings, including catenanes and knotted rings. Type II topoisomerases break and join 2 DNA strands simultaneously in an ATP-dependent manner. This is DNA gyrase subunit A from Thermotoga maritima (strain ATCC 43589 / DSM 3109 / JCM 10099 / NBRC 100826 / MSB8).